We begin with the raw amino-acid sequence, 327 residues long: Porphobilinogen deaminase (327 aa).

S-(dipyrrolylmethanemethyl)cysteine is present on cysteine 251.

The protein belongs to the HMBS family. Dipyrromethane is required as a cofactor.

The enzyme catalyses 4 porphobilinogen + H2O = hydroxymethylbilane + 4 NH4(+). It participates in porphyrin-containing compound metabolism; protoporphyrin-IX biosynthesis; coproporphyrinogen-III from 5-aminolevulinate: step 2/4. Tetrapolymerization of the monopyrrole PBG into the hydroxymethylbilane pre-uroporphyrinogen in several discrete steps. In Kluyveromyces lactis (strain ATCC 8585 / CBS 2359 / DSM 70799 / NBRC 1267 / NRRL Y-1140 / WM37) (Yeast), this protein is Porphobilinogen deaminase (HEM3).